The chain runs to 194 residues: Small ribosomal subunit protein uS5 (194 aa).

The region spanning 26 to 89 (LEEKVVEIRR…ADAKKRIIKV (64 aa)) is the S5 DRBM domain.

It belongs to the universal ribosomal protein uS5 family. In terms of assembly, part of the 30S ribosomal subunit. Contacts proteins S4 and S8.

In terms of biological role, with S4 and S12 plays an important role in translational accuracy. Located at the back of the 30S subunit body where it stabilizes the conformation of the head with respect to the body. In Sulfurihydrogenibium sp. (strain YO3AOP1), this protein is Small ribosomal subunit protein uS5.